Consider the following 418-residue polypeptide: Actin-related protein 3B (418 aa).

The protein belongs to the actin family. ARP3 subfamily. In terms of assembly, interacts with the Arp2/3 complex composed of ARP2, ARP3, ARPC1B, ARPC1B/p41-ARC, ARPC2/p34-ARC, ARPC3/p21-ARC, ARPC4/p20-ARC and ARPC5/p16-ARC. As to expression, detected in fetal brain. Detected throughout the adult brain, in neurons from gray matter, but not in white matter. Detected in liver, skeletal muscle and pancreas. Detected in lung adenocarcinoma cells with low metastatic potential, but not in lung adenocarcinoma cells with high metastatic potential.

It is found in the cytoplasm. The protein resides in the cytoskeleton. It localises to the cell projection. Its function is as follows. Plays a role in the organization of the actin cytoskeleton. May function as ATP-binding component of the Arp2/3 complex which is involved in regulation of actin polymerization and together with an activating nucleation-promoting factor (NPF) mediates the formation of branched actin networks. May decrease the metastatic potential of tumors. The chain is Actin-related protein 3B (ACTR3B) from Homo sapiens (Human).